The following is a 433-amino-acid chain: Enolase (433 aa).

A (2R)-2-phosphoglycerate-binding site is contributed by Gln167. Residue Glu209 is the Proton donor of the active site. Asp246, Glu291, and Asp318 together coordinate Mg(2+). The (2R)-2-phosphoglycerate site is built by Lys343, Arg372, Ser373, and Lys394. Lys343 functions as the Proton acceptor in the catalytic mechanism.

The protein belongs to the enolase family. Component of the RNA degradosome, a multiprotein complex involved in RNA processing and mRNA degradation. The cofactor is Mg(2+).

Its subcellular location is the cytoplasm. It localises to the secreted. It is found in the cell surface. It catalyses the reaction (2R)-2-phosphoglycerate = phosphoenolpyruvate + H2O. Its pathway is carbohydrate degradation; glycolysis; pyruvate from D-glyceraldehyde 3-phosphate: step 4/5. Functionally, catalyzes the reversible conversion of 2-phosphoglycerate (2-PG) into phosphoenolpyruvate (PEP). It is essential for the degradation of carbohydrates via glycolysis. This Marinomonas sp. (strain MWYL1) protein is Enolase.